Consider the following 397-residue polypeptide: MLHQKIAHKVRKVVVPGISLLIFFQGCLILLFLQLTYKTLYCRNDIRKQIGLNKTKRLFIVLVSSILHVVAPSAVRITTENSSVPKGTFFLDLKKKRILSHLKSNSVAICNHQIYTDWIFLWWLAYTSNLGANVFIILKKSLASIPILGFGMRNYNFIFMSRKWAQDKITLSNSLAGLDSNARGAGSLAGKSPERITEEGESIWNPEVIDPKQIHWPYNLILFPEGTNLSADTRQKSAKYAAKIGKKPFKNVLLPHSTGLRYSLQKLKPSIESLYDITIGYSGVKQEEYGELIYGLKSIFLEGKYPKLVDIHIRAFDVKDIPLEDENEFSEWLYKIWSEKDALMERYYSTGSFVSDPETNHSVTDSFKINRIELTEVLILPTLTIIWLVYKLYCFIF.

The short motif at 112–117 (HQIYTD) is the HXXXXD motif element.

Belongs to the 1-acyl-sn-glycerol-3-phosphate acyltransferase family.

The protein localises to the lipid droplet. It catalyses the reaction 1-heptadecanoyl-sn-glycero-3-phosphate + octadecanoyl-CoA = 1-heptadecanoyl-2-octadecanoyl-sn-glycero-3-phosphate + CoA. The catalysed reaction is 1-heptadecanoyl-sn-glycero-3-phosphate + tetradecanoyl-CoA = 1-heptadecanoyl-2-tetradecanoyl-sn-glycero-3-phosphate + CoA. The enzyme catalyses 1-heptadecanoyl-sn-glycero-3-phosphate + hexadecanoyl-CoA = 1-heptadecanoyl-2-hexadecanoyl-sn-glycero-3-phosphate + CoA. Its function is as follows. Acyltransferase with lysophosphatidic acid acyltransferase (LPAAT) activity. Fatty acyl substrates include 18:0-acyl-CoA, 16:0-acyl-CoA, 17:0-acyl-CoA and 14:0-acyl-CoA. Responsible for the acyl-CoA-dependent introduction of saturated very long chain fatty acids (VLCFAs) into phosphatidylinositol, transferring saturated FAs with 18 to 26 carbon atoms. Responsible for the incorporation of stearate into phosphatidylinositol. Overexpression has an effect on chromosome stability. Regulates phosphorylation and expression of glycerol-3-phosphate acyltransferase SCT1. The protein is 2-acyl-1-lysophosphatidylinositol acyltransferase of Saccharomyces cerevisiae (strain ATCC 204508 / S288c) (Baker's yeast).